Reading from the N-terminus, the 237-residue chain is Thiamine-phosphate synthase (237 aa).

Residues 57 to 61 (QLRDK) and asparagine 98 contribute to the 4-amino-2-methyl-5-(diphosphooxymethyl)pyrimidine site. Residues aspartate 99 and aspartate 118 each coordinate Mg(2+). Residue serine 136 participates in 4-amino-2-methyl-5-(diphosphooxymethyl)pyrimidine binding. 162 to 164 (TPT) serves as a coordination point for 2-[(2R,5Z)-2-carboxy-4-methylthiazol-5(2H)-ylidene]ethyl phosphate. Lysine 165 is a 4-amino-2-methyl-5-(diphosphooxymethyl)pyrimidine binding site. Glycine 193 contributes to the 2-[(2R,5Z)-2-carboxy-4-methylthiazol-5(2H)-ylidene]ethyl phosphate binding site.

Belongs to the thiamine-phosphate synthase family. Mg(2+) is required as a cofactor.

The catalysed reaction is 2-[(2R,5Z)-2-carboxy-4-methylthiazol-5(2H)-ylidene]ethyl phosphate + 4-amino-2-methyl-5-(diphosphooxymethyl)pyrimidine + 2 H(+) = thiamine phosphate + CO2 + diphosphate. It carries out the reaction 2-(2-carboxy-4-methylthiazol-5-yl)ethyl phosphate + 4-amino-2-methyl-5-(diphosphooxymethyl)pyrimidine + 2 H(+) = thiamine phosphate + CO2 + diphosphate. The enzyme catalyses 4-methyl-5-(2-phosphooxyethyl)-thiazole + 4-amino-2-methyl-5-(diphosphooxymethyl)pyrimidine + H(+) = thiamine phosphate + diphosphate. The protein operates within cofactor biosynthesis; thiamine diphosphate biosynthesis; thiamine phosphate from 4-amino-2-methyl-5-diphosphomethylpyrimidine and 4-methyl-5-(2-phosphoethyl)-thiazole: step 1/1. In terms of biological role, condenses 4-methyl-5-(beta-hydroxyethyl)thiazole monophosphate (THZ-P) and 2-methyl-4-amino-5-hydroxymethyl pyrimidine pyrophosphate (HMP-PP) to form thiamine monophosphate (TMP). This Mycolicibacterium gilvum (strain PYR-GCK) (Mycobacterium gilvum (strain PYR-GCK)) protein is Thiamine-phosphate synthase.